The sequence spans 253 residues: Phycoerythrobilin:ferredoxin oxidoreductase (253 aa).

This sequence belongs to the HY2 family.

It catalyses the reaction (3Z)-phycoerythrobilin + oxidized 2[4Fe-4S]-[ferredoxin] = 15,16-dihydrobiliverdin + reduced 2[4Fe-4S]-[ferredoxin] + 2 H(+). Its function is as follows. Catalyzes the two-electron reduction of the C2 and C3(1) diene system of 15,16-dihydrobiliverdin. In Prochlorococcus marinus (strain MIT 9312), this protein is Phycoerythrobilin:ferredoxin oxidoreductase.